Reading from the N-terminus, the 475-residue chain is UDP-N-acetylmuramate--L-alanine ligase (475 aa).

118-124 (GTHGKTT) is a binding site for ATP.

Belongs to the MurCDEF family.

The protein resides in the cytoplasm. It carries out the reaction UDP-N-acetyl-alpha-D-muramate + L-alanine + ATP = UDP-N-acetyl-alpha-D-muramoyl-L-alanine + ADP + phosphate + H(+). The protein operates within cell wall biogenesis; peptidoglycan biosynthesis. Functionally, cell wall formation. The sequence is that of UDP-N-acetylmuramate--L-alanine ligase from Paracoccus denitrificans (strain Pd 1222).